A 166-amino-acid chain; its full sequence is NAD(P)H-quinone oxidoreductase subunit I, chloroplastic (166 aa).

2 4Fe-4S ferredoxin-type domains span residues 55–84 (GRIHFEFDKCIACEVCVRVCPIDLPVVDWK) and 95–124 (LNYSIDFGICIFCGNCVEYCPTNCLSMTEE). [4Fe-4S] cluster is bound by residues Cys64, Cys67, Cys70, Cys74, Cys104, Cys107, Cys110, and Cys114.

The protein belongs to the complex I 23 kDa subunit family. In terms of assembly, NDH is composed of at least 16 different subunits, 5 of which are encoded in the nucleus. The cofactor is [4Fe-4S] cluster.

Its subcellular location is the plastid. It is found in the chloroplast thylakoid membrane. The enzyme catalyses a plastoquinone + NADH + (n+1) H(+)(in) = a plastoquinol + NAD(+) + n H(+)(out). The catalysed reaction is a plastoquinone + NADPH + (n+1) H(+)(in) = a plastoquinol + NADP(+) + n H(+)(out). Functionally, NDH shuttles electrons from NAD(P)H:plastoquinone, via FMN and iron-sulfur (Fe-S) centers, to quinones in the photosynthetic chain and possibly in a chloroplast respiratory chain. The immediate electron acceptor for the enzyme in this species is believed to be plastoquinone. Couples the redox reaction to proton translocation, and thus conserves the redox energy in a proton gradient. The sequence is that of NAD(P)H-quinone oxidoreductase subunit I, chloroplastic from Polymnia canadensis (White-flowered leaf-cup).